A 231-amino-acid chain; its full sequence is Large ribosomal subunit protein uL1 (231 aa).

Belongs to the universal ribosomal protein uL1 family. As to quaternary structure, part of the 50S ribosomal subunit.

In terms of biological role, binds directly to 23S rRNA. The L1 stalk is quite mobile in the ribosome, and is involved in E site tRNA release. Functionally, protein L1 is also a translational repressor protein, it controls the translation of the L11 operon by binding to its mRNA. The protein is Large ribosomal subunit protein uL1 of Halalkalibacterium halodurans (strain ATCC BAA-125 / DSM 18197 / FERM 7344 / JCM 9153 / C-125) (Bacillus halodurans).